Here is a 278-residue protein sequence, read N- to C-terminus: Large ribosomal subunit protein uL2 (278 aa).

Disordered regions lie at residues 1–53 and 224–278; these read MAIR…TTRH and VVMN…NKKR. A compositionally biased stretch (basic and acidic residues) spans 23-33; the sequence is EITRSTPEKSL. Over residues 258–267 the composition is skewed to polar residues; that stretch reads RNPNRYSNNM. Residues 269 to 278 are compositionally biased toward basic residues; it reads VRRRRPNKKR.

Belongs to the universal ribosomal protein uL2 family. As to quaternary structure, part of the 50S ribosomal subunit. Forms a bridge to the 30S subunit in the 70S ribosome.

Its function is as follows. One of the primary rRNA binding proteins. Required for association of the 30S and 50S subunits to form the 70S ribosome, for tRNA binding and peptide bond formation. It has been suggested to have peptidyltransferase activity; this is somewhat controversial. Makes several contacts with the 16S rRNA in the 70S ribosome. The chain is Large ribosomal subunit protein uL2 from Corynebacterium aurimucosum (strain ATCC 700975 / DSM 44827 / CIP 107346 / CN-1) (Corynebacterium nigricans).